The following is a 180-amino-acid chain: Large ribosomal subunit protein uL5 (180 aa).

It belongs to the universal ribosomal protein uL5 family. In terms of assembly, part of the 50S ribosomal subunit; part of the 5S rRNA/L5/L18/L25 subcomplex. Contacts the 5S rRNA and the P site tRNA. Forms a bridge to the 30S subunit in the 70S ribosome.

Functionally, this is one of the proteins that bind and probably mediate the attachment of the 5S RNA into the large ribosomal subunit, where it forms part of the central protuberance. In the 70S ribosome it contacts protein S13 of the 30S subunit (bridge B1b), connecting the 2 subunits; this bridge is implicated in subunit movement. Contacts the P site tRNA; the 5S rRNA and some of its associated proteins might help stabilize positioning of ribosome-bound tRNAs. The polypeptide is Large ribosomal subunit protein uL5 (Stenotrophomonas maltophilia (strain K279a)).